A 299-amino-acid chain; its full sequence is Hemolysin C homolog (299 aa).

2 consecutive CBS domains span residues 80-142 and 145-202; these read MVPR…NGRL and LIRK…IDDE.

The protein belongs to the UPF0053 family. Hemolysin C subfamily.

The protein is Hemolysin C homolog (tlyC) of Rickettsia conorii (strain ATCC VR-613 / Malish 7).